Reading from the N-terminus, the 68-residue chain is Large ribosomal subunit protein uL30 (68 aa).

This sequence belongs to the universal ribosomal protein uL30 family. As to quaternary structure, part of the 50S ribosomal subunit.

This Kocuria rhizophila (strain ATCC 9341 / DSM 348 / NBRC 103217 / DC2201) protein is Large ribosomal subunit protein uL30.